The primary structure comprises 428 residues: Gamma-glutamyl phosphate reductase (428 aa).

It belongs to the gamma-glutamyl phosphate reductase family.

It is found in the cytoplasm. It carries out the reaction L-glutamate 5-semialdehyde + phosphate + NADP(+) = L-glutamyl 5-phosphate + NADPH + H(+). It participates in amino-acid biosynthesis; L-proline biosynthesis; L-glutamate 5-semialdehyde from L-glutamate: step 2/2. Catalyzes the NADPH-dependent reduction of L-glutamate 5-phosphate into L-glutamate 5-semialdehyde and phosphate. The product spontaneously undergoes cyclization to form 1-pyrroline-5-carboxylate. The protein is Gamma-glutamyl phosphate reductase of Zymomonas mobilis subsp. mobilis (strain ATCC 31821 / ZM4 / CP4).